The chain runs to 147 residues: Large ribosomal subunit protein uL15 (147 aa).

The span at 1–13 (MELHSLKAAEGSR) shows a compositional bias: basic and acidic residues. The tract at residues 1–57 (MELHSLKAAEGSRKVRNRVGRGTSSGNGKTSGRGQKGQKSRSGGGVRPGFEGGQTEL) is disordered. Composition is skewed to gly residues over residues 23 to 35 (TSSGNGKTSGRGQ) and 42 to 52 (SGGGVRPGFEG).

The protein belongs to the universal ribosomal protein uL15 family. As to quaternary structure, part of the 50S ribosomal subunit.

Binds to the 23S rRNA. This chain is Large ribosomal subunit protein uL15, found in Lactococcus lactis subsp. cremoris (strain MG1363).